Consider the following 316-residue polypeptide: Pantothenate kinase (316 aa).

95-102 is an ATP binding site; the sequence is GSVAVGKS.

It belongs to the prokaryotic pantothenate kinase family.

It localises to the cytoplasm. The catalysed reaction is (R)-pantothenate + ATP = (R)-4'-phosphopantothenate + ADP + H(+). The protein operates within cofactor biosynthesis; coenzyme A biosynthesis; CoA from (R)-pantothenate: step 1/5. The sequence is that of Pantothenate kinase from Shewanella sp. (strain MR-7).